The following is an 85-amino-acid chain: Small proline-rich protein 2D (85 aa).

The span at 1-11 (MSYQQQQCKQP) shows a compositional bias: low complexity. The tract at residues 1-20 (MSYQQQQCKQPCQPPPVCPP) is disordered. Tandem repeats lie at residues 21–29 (KKCPEPCPP), 30–38 (LKCPEPCPP), 39–47 (PKCPEPCPP), and 48–56 (PKCPEPCPE). A 4 X 9 AA approximate tandem repeats region spans residues 21–56 (KKCPEPCPPLKCPEPCPPPKCPEPCPPPKCPEPCPE). The tract at residues 57 to 85 (PCPPPSCQQKCPPAQPPPPCQQKCPPKSK) is disordered.

This sequence belongs to the cornifin (SPRR) family. As to expression, expressed in uterus.

The protein resides in the cytoplasm. Its function is as follows. Cross-linked envelope protein of keratinocytes. It is a keratinocyte protein that first appears in the cell cytosol, but ultimately becomes cross-linked to membrane proteins by transglutaminase. All that results in the formation of an insoluble envelope beneath the plasma membrane. The protein is Small proline-rich protein 2D (Sprr2d) of Mus musculus (Mouse).